A 518-amino-acid chain; its full sequence is Probable carboxypeptidase 2 (518 aa).

Residues 1–21 (MVAYHLLTLISLGLGSHCASA) form the signal peptide. Asparagine 46 carries an N-linked (GlcNAc...) asparagine glycan. The disordered stretch occupies residues 53-76 (PAFTSPGTVPRGFSDGTSGPTRDE). Positions 71-351 (GPTRDETMEG…VMAKSILQTA (281 aa)) constitute a Peptidase M14 domain. N-linked (GlcNAc...) asparagine glycosylation is present at asparagine 116. Residues histidine 136, glutamate 139, and histidine 224 each contribute to the Zn(2+) site. Catalysis depends on glutamate 322, which acts as the Proton donor/acceptor. 2 N-linked (GlcNAc...) asparagine glycosylation sites follow: asparagine 393 and asparagine 459.

It belongs to the peptidase M14 family. The cofactor is Zn(2+).

The protein resides in the secreted. In terms of biological role, extracellular metalloprotease that contributes to pathogenicity. This Trichophyton verrucosum (strain HKI 0517) protein is Probable carboxypeptidase 2 (MCPB).